Consider the following 1749-residue polypeptide: Kinase non-catalytic C-lobe domain-containing protein 1 (1749 aa).

The region spanning 37–217 (VSLADILSLR…QDVSESSWRE (181 aa)) is the KIND 1 domain. Disordered stretches follow at residues 210–275 (VSES…SHSR) and 361–435 (CRLW…ARQL). 2 stretches are compositionally biased toward basic and acidic residues: residues 363-373 (LWPEQEPEHQL) and 410-430 (ADPRDASGEAQTPRDDERIPE). A KIND 2 domain is found at 444-608 (VSLQDLLSQL…RASICQVYQE (165 aa)). Disordered stretches follow at residues 689-871 (ARDQ…RPAD) and 962-1061 (QASP…GGAS). A compositionally biased stretch (basic and acidic residues) spans 702–717 (ERGGQREGEGEEKLSL). Composition is skewed to low complexity over residues 739 to 748 (QGAAPEPLGA) and 766 to 779 (PANQPEGASSAAPG). Residues 823-833 (HGPRHPPKPPR) show a composition bias toward basic residues. Residues 853–871 (GERDDQSPDSVPERPRPAD) show a composition bias toward basic and acidic residues. A Phosphoserine modification is found at S964. The span at 980 to 990 (SQSPRSPSSKR) shows a compositional bias: low complexity. Residues 1005-1019 (RTSSRAPCSPTSVSD) show a composition bias toward polar residues. Residues 1040–1056 (VKAERAQQPEAGEDRRP) show a composition bias toward basic and acidic residues. Positions 1133–1190 (QQLMMEKRNYRKTLKFYQKLLQKEKRNKGSDVKTMLSKLKGQLEEMKSRVQFLSLVKK) form a coiled coil. Positions 1246 to 1371 (KARILQAGTP…HLLGLLEVGM (126 aa)) constitute an N-terminal Ras-GEF domain. Residues 1468–1719 (STHQLFSQLT…SGADISTLAA (252 aa)) enclose the Ras-GEF domain.

In terms of assembly, interacts (via KIND2) with MAP2; the interaction enhances MAP2 phosphorylation and localizes KNDC1 to dendrites. Expressed specifically in the cerebral cortex.

It is found in the cell projection. It localises to the dendrite. The protein localises to the perikaryon. In terms of biological role, RAS-Guanine nucleotide exchange factor (GEF) that controls the negative regulation of neuronal dendrite growth by mediating a signaling pathway linking RAS and MAP2. May be involved in cellular senescence. The chain is Kinase non-catalytic C-lobe domain-containing protein 1 from Homo sapiens (Human).